The primary structure comprises 153 residues: 3-hydroxyacyl-[acyl-carrier-protein] dehydratase FabZ (153 aa).

His-54 is an active-site residue.

This sequence belongs to the thioester dehydratase family. FabZ subfamily.

The protein resides in the cytoplasm. The enzyme catalyses a (3R)-hydroxyacyl-[ACP] = a (2E)-enoyl-[ACP] + H2O. In terms of biological role, involved in unsaturated fatty acids biosynthesis. Catalyzes the dehydration of short chain beta-hydroxyacyl-ACPs and long chain saturated and unsaturated beta-hydroxyacyl-ACPs. This is 3-hydroxyacyl-[acyl-carrier-protein] dehydratase FabZ from Shewanella frigidimarina (strain NCIMB 400).